The sequence spans 169 residues: Lipoprotein signal peptidase (169 aa).

2 helical membrane-spanning segments follow: residues 56–76 and 84–104; these read FLPP…VIIY and QPLF…NLID. Catalysis depends on residues Asp-113 and Asp-139. The helical transmembrane segment at 132–152 threads the bilayer; it reads WPIFNIADSAITIGACMLIIF.

Belongs to the peptidase A8 family.

Its subcellular location is the cell inner membrane. The catalysed reaction is Release of signal peptides from bacterial membrane prolipoproteins. Hydrolyzes -Xaa-Yaa-Zaa-|-(S,diacylglyceryl)Cys-, in which Xaa is hydrophobic (preferably Leu), and Yaa (Ala or Ser) and Zaa (Gly or Ala) have small, neutral side chains.. Its pathway is protein modification; lipoprotein biosynthesis (signal peptide cleavage). Its function is as follows. This protein specifically catalyzes the removal of signal peptides from prolipoproteins. This Chlorobium phaeovibrioides (strain DSM 265 / 1930) (Prosthecochloris vibrioformis (strain DSM 265)) protein is Lipoprotein signal peptidase.